Consider the following 53-residue polypeptide: uncharacterized protein (53 aa).

This is an uncharacterized protein from Dictyostelium discoideum (Social amoeba).